The following is a 304-amino-acid chain: MKVRVLGSAAGGGFPQWNCNCPNCDGLRRGTVRARARTQSSIAVTGDDENWVLFNASPDVLQQLREAPELQPARALRDTAIRAIVLIDAQIDHTTGLLMLREHRQPHALWCTAPVREDLSTGNPLFGVLGHYCGLDLNEIPLQGGFDIAGVPGVGFAALPLTSNAPPYSPRRDKPVPGDNIGVTLTDTRSGRRLFYAPGLGEMEPHVWAAMQAADCVLVDGTLWTDDEMIRLGASSKTSRAMGHLPQSGPGGMLEWLDRLPASTRKVLIHINNTNPILDEDSPQRAELAAHGVEVAWDGMVLSL.

This sequence belongs to the PqqB family.

It functions in the pathway cofactor biosynthesis; pyrroloquinoline quinone biosynthesis. In terms of biological role, may be involved in the transport of PQQ or its precursor to the periplasm. This Azoarcus sp. (strain BH72) protein is Coenzyme PQQ synthesis protein B.